Here is a 258-residue protein sequence, read N- to C-terminus: Small ribosomal subunit protein mS23 (258 aa).

Belongs to the mitochondrion-specific ribosomal protein mS23 family. Component of the mitochondrial small ribosomal subunit.

It is found in the mitochondrion. The sequence is that of Small ribosomal subunit protein mS23 from Aspergillus fumigatus (strain CBS 144.89 / FGSC A1163 / CEA10) (Neosartorya fumigata).